The primary structure comprises 195 residues: Nucleoside-triphosphatase THEP1 (195 aa).

ATP is bound by residues 11-18 and 103-110; these read GRPGSGKS and VVVIDEIG.

This sequence belongs to the THEP1 NTPase family.

It carries out the reaction a ribonucleoside 5'-triphosphate + H2O = a ribonucleoside 5'-diphosphate + phosphate + H(+). Functionally, has nucleotide phosphatase activity towards ATP, GTP, CTP, TTP and UTP. May hydrolyze nucleoside diphosphates with lower efficiency. This chain is Nucleoside-triphosphatase THEP1, found in Korarchaeum cryptofilum (strain OPF8).